The chain runs to 216 residues: MASQERVDSVTKGTGFRRCRKQAGYTPGTCELLRVMMKESKLTNFQQRHIMDTMKRGAPLPLQCNPTSSLRGSPSKKAASAIYLPPILATHSHLRPASLCQANGAYSREQFKPQATRDLEKEKRRLQNIFATGKDKEERKKVPHVRQEDPAPELDRFDELVKEIQDRKEFLAAMEALGQGRQYRSIILAEISQKLREMEDIDRRRSKELRKALATT.

Belongs to the UPF0193 (EVG1) family.

In Mus musculus (Mouse), this protein is UPF0193 protein EVG1 homolog.